A 492-amino-acid chain; its full sequence is MKIDMRNISKSFGTNKVLEKIDLELQSGQIHALMGENGAGKSTLMNILTGLFPASTGTIYIDGEERTFSNPQEAEEFGISFIHQEMNTWPEMTVLENLFLGREIKTTFGLLNQKLMRQKALEAFKRLGVTIPLDIPIGNLSVGQQQMIEIAKSLLSQLSILVMDEPTAALTDRETENLFRVIRSLKQEGVGIVYISHRMEEIFKITDFVTVMRDGVIVDTKETSLTNSDELVKKMVGRKLEDYYPEKHSEIGPVAFEVSNLCGDNFEDVSFYVRKGEILGFSGLMGAGRTEVMRTIFGIDKKKSGKVKIDDQEITITSPSQAIKQGIGFLTENRKDEGLILDFNIKDNMTLPSTKDFSKHGFFDEKTSTTFVQQLINRLYIKSGRPDLEVGNLSGGNQQKVVLAKWIGIAPKVLILDEPTRGVDVGAKREIYQLMNELADRGVPIVMVSSDLPEILGVSDRIMVMHEGRISGELSRKEADQEKVMQLATGGK.

ABC transporter domains follow at residues 3-239 (IDMR…VGRK) and 238-492 (RKLE…TGGK). Residue 35-42 (GENGAGKS) participates in ATP binding.

It belongs to the ABC transporter superfamily. Ribose importer (TC 3.A.1.2.1) family. As to quaternary structure, the complex is composed of an ATP-binding protein (RbsA), two transmembrane proteins (RbsC) and a solute-binding protein (RbsB).

It is found in the cell membrane. The catalysed reaction is D-ribose(out) + ATP + H2O = D-ribose(in) + ADP + phosphate + H(+). Part of the ABC transporter complex RbsABC involved in ribose import. Responsible for energy coupling to the transport system. The chain is Ribose import ATP-binding protein RbsA from Streptococcus agalactiae serotype Ia (strain ATCC 27591 / A909 / CDC SS700).